Reading from the N-terminus, the 145-residue chain is D-aminoacyl-tRNA deacylase (145 aa).

Positions 137-138 match the Gly-cisPro motif, important for rejection of L-amino acids motif; it reads GP.

Belongs to the DTD family. As to quaternary structure, homodimer.

The protein localises to the cytoplasm. The enzyme catalyses glycyl-tRNA(Ala) + H2O = tRNA(Ala) + glycine + H(+). It carries out the reaction a D-aminoacyl-tRNA + H2O = a tRNA + a D-alpha-amino acid + H(+). An aminoacyl-tRNA editing enzyme that deacylates mischarged D-aminoacyl-tRNAs. Also deacylates mischarged glycyl-tRNA(Ala), protecting cells against glycine mischarging by AlaRS. Acts via tRNA-based rather than protein-based catalysis; rejects L-amino acids rather than detecting D-amino acids in the active site. By recycling D-aminoacyl-tRNA to D-amino acids and free tRNA molecules, this enzyme counteracts the toxicity associated with the formation of D-aminoacyl-tRNA entities in vivo and helps enforce protein L-homochirality. The polypeptide is D-aminoacyl-tRNA deacylase (Teredinibacter turnerae (strain ATCC 39867 / T7901)).